The following is a 317-amino-acid chain: MIDPKIVMAIVISFIVASILGPIIIPLLHKLKFGQNIRQEGPKSHLKKAGTPTIGGLIFIFATIITMFIMVGNPTDEAMIALYSFVGFGFVGFLDDLLKIIKKKNEGLTSGQKMILLLIVSGFLTWYAYKYIGTSINIPFLNGQINFGLFYIPFVMFYFAGVTNAVNLTDGLDGLATSVTVLVTTFLGIISYNLGHISLAIFCVALAGALLAFLRFNAFPARVFMGDTGSLALGGAVAMVALILKMPLILVLIGIIYVIETLSVILQVASFKLTGKRIFKMAPIHHHFEQLGWSETKIVSVFSIITVVFCFIAFASL.

The next 9 helical transmembrane spans lie at 6–26 (IVMAIVISFIVASILGPIIIP), 52–72 (PTIGGLIFIFATIITMFIMVG), 78–98 (AMIALYSFVGFGFVGFLDDLL), 114–134 (MILLLIVSGFLTWYAYKYIGT), 145–165 (INFGLFYIPFVMFYFAGVTNA), 171–191 (GLDGLATSVTVLVTTFLGIIS), 194–214 (LGHISLAIFCVALAGALLAFL), 223–244 (VFMGDTGSLALGGAVAMVALIL), and 297–317 (KIVSVFSIITVVFCFIAFASL).

Belongs to the glycosyltransferase 4 family. MraY subfamily. It depends on Mg(2+) as a cofactor.

Its subcellular location is the cell membrane. The enzyme catalyses UDP-N-acetyl-alpha-D-muramoyl-L-alanyl-gamma-D-glutamyl-meso-2,6-diaminopimeloyl-D-alanyl-D-alanine + di-trans,octa-cis-undecaprenyl phosphate = di-trans,octa-cis-undecaprenyl diphospho-N-acetyl-alpha-D-muramoyl-L-alanyl-D-glutamyl-meso-2,6-diaminopimeloyl-D-alanyl-D-alanine + UMP. The protein operates within cell wall biogenesis; peptidoglycan biosynthesis. In terms of biological role, catalyzes the initial step of the lipid cycle reactions in the biosynthesis of the cell wall peptidoglycan: transfers peptidoglycan precursor phospho-MurNAc-pentapeptide from UDP-MurNAc-pentapeptide onto the lipid carrier undecaprenyl phosphate, yielding undecaprenyl-pyrophosphoryl-MurNAc-pentapeptide, known as lipid I. The polypeptide is Phospho-N-acetylmuramoyl-pentapeptide-transferase (Clostridium perfringens (strain 13 / Type A)).